Consider the following 367-residue polypeptide: Aurora kinase (367 aa).

The segment at 30-49 (TTATNGAPPQARVQPGKGYR) is disordered. Residues 109–360 (FEIGKVLGKG…LKEVKKHPWI (252 aa)) form the Protein kinase domain. ATP-binding positions include 115-123 (LGKGKFGRV) and lysine 138. The active-site Proton acceptor is the aspartate 232.

Belongs to the protein kinase superfamily. Ser/Thr protein kinase family. Aurora subfamily.

Its subcellular location is the nucleus. The protein resides in the cytoplasm. The protein localises to the cytoskeleton. It is found in the spindle. It localises to the chromosome. Its subcellular location is the centromere. The protein resides in the kinetochore. The catalysed reaction is L-seryl-[protein] + ATP = O-phospho-L-seryl-[protein] + ADP + H(+). It carries out the reaction L-threonyl-[protein] + ATP = O-phospho-L-threonyl-[protein] + ADP + H(+). Its function is as follows. Component of the chromosomal passenger complex (CPC), a complex that acts as a key regulator of chromosome segregation and cytokinesis. Has a role in error-correction of aberrent kinetochore-microtubule attachments to ensure that sister kinetochores become bioriented and connect to opposite poles by promoting spindle assembly checkpoint signaling. This is Aurora kinase (IPL1) from Eremothecium gossypii (strain ATCC 10895 / CBS 109.51 / FGSC 9923 / NRRL Y-1056) (Yeast).